Consider the following 131-residue polypeptide: NADPH-dependent 7-cyano-7-deazaguanine reductase (131 aa).

C41 acts as the Thioimide intermediate in catalysis. D48 serves as the catalytic Proton donor. Residues 63 to 65 (VEL) and 82 to 83 (HE) each bind substrate.

The protein belongs to the GTP cyclohydrolase I family. QueF type 1 subfamily.

Its subcellular location is the cytoplasm. It catalyses the reaction 7-aminomethyl-7-carbaguanine + 2 NADP(+) = 7-cyano-7-deazaguanine + 2 NADPH + 3 H(+). It participates in tRNA modification; tRNA-queuosine biosynthesis. Catalyzes the NADPH-dependent reduction of 7-cyano-7-deazaguanine (preQ0) to 7-aminomethyl-7-deazaguanine (preQ1). This Nitratiruptor sp. (strain SB155-2) protein is NADPH-dependent 7-cyano-7-deazaguanine reductase.